Consider the following 208-residue polypeptide: 3-isopropylmalate dehydratase small subunit 2 (208 aa).

Positions 163-208 are disordered; sequence EGERLDNASTSAGHGHAGTPLGDDPAKEDGPRPEQASGHQKEEHHA.

It belongs to the LeuD family. LeuD type 2 subfamily. In terms of assembly, heterodimer of LeuC and LeuD.

The enzyme catalyses (2R,3S)-3-isopropylmalate = (2S)-2-isopropylmalate. It functions in the pathway amino-acid biosynthesis; L-leucine biosynthesis; L-leucine from 3-methyl-2-oxobutanoate: step 2/4. Its function is as follows. Catalyzes the isomerization between 2-isopropylmalate and 3-isopropylmalate, via the formation of 2-isopropylmaleate. This chain is 3-isopropylmalate dehydratase small subunit 2 (leuD2), found in Deinococcus radiodurans (strain ATCC 13939 / DSM 20539 / JCM 16871 / CCUG 27074 / LMG 4051 / NBRC 15346 / NCIMB 9279 / VKM B-1422 / R1).